Reading from the N-terminus, the 233-residue chain is Antilisterial bacteriocin subtilosin biosynthesis protein AlbG (233 aa).

The next 6 helical transmembrane spans lie at 7–27, 46–66, 116–136, 145–165, 176–198, and 203–220; these read FTLLLLLIGMAAYSFGWVQAV, GLLACTAALLMLPAFLYLHYV, TYVMAAVLCQVIIFGCMFEIV, TPPAFSMGLAMLLILYLLFCM, GSLFRKVFAGALAAAGIWWMLSF, and LLFLIILAAIQQIGSFIY.

The protein resides in the cell membrane. Functionally, involved in the production of the bacteriocin subtilosin. This Bacillus subtilis (strain 168) protein is Antilisterial bacteriocin subtilosin biosynthesis protein AlbG (albG).